Reading from the N-terminus, the 302-residue chain is MCAERLGQFMTLALVLATFDPARGTDATNPPEGPQDRSPQQKGRLSLQNTAEIQHCLVNAGDVGCGVFECFENNSSEIRGLHGICMTFLHNAGKFDAQGKSFIKDALKCKAHALRHRFGCISRKCPAIREMVFQLQRECYLKHDLCAAAQENTRVIVEMIHFKDLLLHEPYVDLVNLLLTCGEEVKEAITHSVQVQCEQNWGSLCSILSFCTSAIQRPPTAPPERQPQVDRTKLSRAHHGEAGHHLPEPSSRETGRGAKGERGSKSHPNAHARGRVGGLGAQGPSGSSEWEDEQSEYSDIRR.

The N-terminal stretch at methionine 1–glycine 24 is a signal peptide. Positions arginine 23–arginine 44 are disordered. N-linked (GlcNAc...) asparagine glycosylation is found at asparagine 73 and asparagine 74. The tract at residues arginine 217 to arginine 302 is disordered. The span at proline 227–serine 264 shows a compositional bias: basic and acidic residues. A phosphoserine mark is found at serine 250 and serine 251. A Phosphothreonine modification is found at threonine 254.

The protein belongs to the stanniocalcin family. As to quaternary structure, homodimer; disulfide-linked.

It is found in the secreted. Has an anti-hypocalcemic action on calcium and phosphate homeostasis. The chain is Stanniocalcin-2 (STC2) from Pongo abelii (Sumatran orangutan).